The primary structure comprises 411 residues: Serine hydroxymethyltransferase (411 aa).

120 to 122 serves as a coordination point for (6S)-5,6,7,8-tetrahydrofolate; it reads GHL. An N6-(pyridoxal phosphate)lysine modification is found at Lys225. Residue 350-352 coordinates (6S)-5,6,7,8-tetrahydrofolate; it reads SPF.

The protein belongs to the SHMT family. In terms of assembly, homodimer. Pyridoxal 5'-phosphate serves as cofactor.

Its subcellular location is the cytoplasm. It catalyses the reaction (6R)-5,10-methylene-5,6,7,8-tetrahydrofolate + glycine + H2O = (6S)-5,6,7,8-tetrahydrofolate + L-serine. The protein operates within one-carbon metabolism; tetrahydrofolate interconversion. It participates in amino-acid biosynthesis; glycine biosynthesis; glycine from L-serine: step 1/1. Its function is as follows. Catalyzes the reversible interconversion of serine and glycine with tetrahydrofolate (THF) serving as the one-carbon carrier. This reaction serves as the major source of one-carbon groups required for the biosynthesis of purines, thymidylate, methionine, and other important biomolecules. Also exhibits THF-independent aldolase activity toward beta-hydroxyamino acids, producing glycine and aldehydes, via a retro-aldol mechanism. This chain is Serine hydroxymethyltransferase, found in Limosilactobacillus reuteri (strain DSM 20016) (Lactobacillus reuteri).